The following is a 533-amino-acid chain: Probable protein kinase UbiB (533 aa).

A helical membrane pass occupies residues 24-44 (LILELPMLPWWLRLLGATLPW). Residues 126–494 (RFEREPLASA…WKGSRHDWLG (369 aa)) enclose the Protein kinase domain. ATP-binding positions include 132 to 140 (LASASVAQV) and Lys154. Catalysis depends on Asp289, which acts as the Proton acceptor. Residues 510-530 (LGQQLEAWPAWVMLAGGVFLI) form a helical membrane-spanning segment.

The protein belongs to the ABC1 family. UbiB subfamily.

Its subcellular location is the cell inner membrane. The protein operates within cofactor biosynthesis; ubiquinone biosynthesis [regulation]. In terms of biological role, is probably a protein kinase regulator of UbiI activity which is involved in aerobic coenzyme Q (ubiquinone) biosynthesis. This chain is Probable protein kinase UbiB, found in Pseudomonas aeruginosa (strain LESB58).